We begin with the raw amino-acid sequence, 284 residues long: MAVDIECRYSCMAPSLRRERFAFQIAPKPSKPLRPCIQLSGKNEASGTVAPTVQEKKVKKRVSFADNQGLALTMVKVFSEFDDPLDIPLNITELLDSIVSLTTAESESFVLDFSQPSADYLDFRNRLQTDHVCLENCVLKDRSIAGTVKVQNLAFEKTVKVRMTFDTWKSFTDFPCWYVKDTYAGSDKDTFSFDISLPEKIQSYERMEFAVCYECNGQTYWDSNKGKNYRIIRAELQSTQGTAQPPNGPDFEIAFDQFGSPRCSYGLFPEWPSYLGYEKLGPYY.

The short motif at 61-64 (RVSF) is the PP1-binding motif element. A CBM21 domain is found at 124–232 (RNRLQTDHVC…SNKGKNYRII (109 aa)). Position 260 is a phosphoserine (Ser-260).

As to quaternary structure, interacts with glycogen, PPP1CC catalytic subunit of PP1 and PYGL. Associates with glycogen particles. Forms complexes with debranching enzyme, glycogen phosphorylase, glycogen synthase and phosphorylase kinase which is necessary for its regulation of PP1 activity.

Functionally, acts as a glycogen-targeting subunit for phosphatase PP1. Facilitates interaction of the PP1 with enzymes of the glycogen metabolism and regulates its activity. Suppresses the rate at which PP1 dephosphorylates (inactivates) glycogen phosphorylase and enhances the rate at which it activates glycogen synthase and therefore limits glycogen breakdown. Its activity is inhibited by PYGL, resulting in inhibition of the glycogen synthase and glycogen phosphorylase phosphatase activities of PP1. Dramatically increases basal and insulin-stimulated glycogen synthesis upon overexpression in hepatocytes. In Bos taurus (Bovine), this protein is Protein phosphatase 1 regulatory subunit 3B (PPP1R3B).